Reading from the N-terminus, the 180-residue chain is UPF0340 protein LL0489 (180 aa).

This sequence belongs to the UPF0340 family.

The protein is UPF0340 protein LL0489 (yeiF) of Lactococcus lactis subsp. lactis (strain IL1403) (Streptococcus lactis).